Reading from the N-terminus, the 96-residue chain is Small ribosomal subunit protein bS6 (96 aa).

It belongs to the bacterial ribosomal protein bS6 family.

Functionally, binds together with bS18 to 16S ribosomal RNA. This is Small ribosomal subunit protein bS6 from Bacillus thuringiensis subsp. konkukian (strain 97-27).